The primary structure comprises 423 residues: UPF0229 protein VP0986 (423 aa).

The disordered stretch occupies residues 69–112; that stretch reads GGVRERVHPGNDQFITGDKIERPKGGGQGSGSGEGNASPDGEGQ. Residues 93 to 102 show a composition bias toward gly residues; sequence GGGQGSGSGE.

It belongs to the UPF0229 family.

This is UPF0229 protein VP0986 from Vibrio parahaemolyticus serotype O3:K6 (strain RIMD 2210633).